Reading from the N-terminus, the 188-residue chain is mRNA transport factor GFD1 (188 aa).

The interval 1–128 (MPLESIWADA…KTQSKQDTAS (128 aa)) is disordered. Basic residues predominate over residues 18 to 28 (KQKPSHKRSNN). Positions 29 to 44 (NKKNNNSRWSNESSSN) are enriched in low complexity. Residues 59 to 79 (GNHESKTKNKIKETLPREKKP) show a composition bias toward basic and acidic residues. Phosphoserine is present on residues Ser87, Ser106, and Ser111. A compositionally biased stretch (low complexity) spans 112 to 128 (PSKMKTTKTQSKQDTAS). Residues 119–164 (KTQSKQDTASKMKLLKKKIEEQREILQKTHHKNQQQQVLMDFLNDE) adopt a coiled-coil conformation.

In terms of assembly, interacts with GLE1, NUP42, NAB2, ZDS1 and probably DBP5. Forms a complex with GLE1 and NAB2.

The protein localises to the cytoplasm. The protein resides in the nucleus. It localises to the nuclear pore complex. Its subcellular location is the nucleus membrane. Its function is as follows. High-copy suppressor of mutant alleles of ATP-dependent RNA helicase DBP5, which is involved in mRNA export from the nucleus. It may also play an important role in a late stage of NAB2-mRNA export. This Saccharomyces cerevisiae (strain ATCC 204508 / S288c) (Baker's yeast) protein is mRNA transport factor GFD1 (GFD1).